The sequence spans 577 residues: Zinc finger protein 384 (577 aa).

The segment at 171 to 225 (TLTEEGGGGGGGGGSVAPKPPRGRKKKRMLESGLPEMNDPYVLSPEDDDDHQKDG) is disordered. The segment covering 175-185 (EGGGGGGGGGS) has biased composition (gly residues). The residue at position 214 (S214) is a Phosphoserine. 8 C2H2-type zinc fingers span residues 228–250 (YRCR…SKSH), 256–278 (HKCP…IRIH), 284–306 (YSCN…TRIH), 317–339 (HKCP…LRIH), 345–367 (YNCS…TRIH), 373–397 (YKCA…RRQH), 403–425 (FKCH…LSTH), and 433–455 (YTCT…MRKH). Residues 501–515 (QQQQQQQQQQQQQQQ) are compositionally biased toward low complexity. A disordered region spans residues 501–550 (QQQQQQQQQQQQQQQQPPPHFQSPGAAPQGGGGGDSNPNPPPQCSFDLTP).

This sequence belongs to the krueppel C2H2-type zinc-finger protein family. As to quaternary structure, interacts with BCAR1.

The protein localises to the nucleus. Its function is as follows. Transcription factor that binds the consensus DNA sequence [GC]AAAAA. Seems to bind and regulate the promoters of MMP1, MMP3, MMP7 and COL1A1. In Homo sapiens (Human), this protein is Zinc finger protein 384 (ZNF384).